We begin with the raw amino-acid sequence, 467 residues long: Glutamate--tRNA ligase (467 aa).

The 'HIGH' region signature appears at Pro12 to Gly22. A compositionally biased stretch (basic and acidic residues) spans Glu114–Trp128. The tract at residues Glu114–Pro140 is disordered. The short motif at Lys244–Arg248 is the 'KMSKS' region element. Position 247 (Lys247) interacts with ATP.

This sequence belongs to the class-I aminoacyl-tRNA synthetase family. Glutamate--tRNA ligase type 1 subfamily. As to quaternary structure, monomer.

The protein localises to the cytoplasm. The enzyme catalyses tRNA(Glu) + L-glutamate + ATP = L-glutamyl-tRNA(Glu) + AMP + diphosphate. Catalyzes the attachment of glutamate to tRNA(Glu) in a two-step reaction: glutamate is first activated by ATP to form Glu-AMP and then transferred to the acceptor end of tRNA(Glu). The polypeptide is Glutamate--tRNA ligase (Azoarcus sp. (strain BH72)).